Consider the following 464-residue polypeptide: F-box/FBD/LRR-repeat protein At1g80470 (464 aa).

In terms of domain architecture, F-box spans 15-62; the sequence is DWISGLADDLLLQILSKVPTRESVFTSRMSKRWRNLWRHVPALDLDSS. 6 LRR repeats span residues 96 to 122, 123 to 150, 152 to 178, 197 to 222, 223 to 249, and 273 to 298; these read EEHC…TILS, KVNI…TLYS, VFDA…KFDG, IITH…KLES, MRED…SITD, and DAED…TISA. The FBD domain maps to 359–413; it reads KEEINLSLVPHCFESSLEYVQLKVPITVSETSSKMELAIYFVRNCSVLKKLMLNE.

The chain is F-box/FBD/LRR-repeat protein At1g80470 from Arabidopsis thaliana (Mouse-ear cress).